Consider the following 513-residue polypeptide: Noroxomaritidine synthase 2 (513 aa).

The helical transmembrane segment at 14 to 34 (HYPEILIAIACFLIFSLLLSA) threads the bilayer. Heme is bound at residue cysteine 458.

The protein belongs to the cytochrome P450 family. The cofactor is heme.

Its subcellular location is the membrane. The catalysed reaction is 4'-O-methylnorbelladine + reduced [NADPH--hemoprotein reductase] + O2 = (10bR,4aS)-noroxomaritidine + oxidized [NADPH--hemoprotein reductase] + 2 H2O + H(+). It carries out the reaction 4'-O-methylnorbelladine + reduced [NADPH--hemoprotein reductase] + O2 = (10bS,4aR)-noroxomaritidine + oxidized [NADPH--hemoprotein reductase] + 2 H2O + H(+). It participates in alkaloid biosynthesis. Cytochrome P450 that catalyzes an intramolecular para-para' C-C phenol coupling of 4'-O-methylnorbelladine in alkaloids biosynthesis, including haemanthamine- and crinamine-type alkaloids, promising anticancer agents. Catalyzes the formation of (10bR,4aS)-noroxomaritidine and (10bS,4aR)-noroxomaritidine from 4'-O-methylnorbelladine. The protein is Noroxomaritidine synthase 2 of Narcissus aff. pseudonarcissus MK-2014 (Daffodil).